The chain runs to 536 residues: Potassium voltage-gated channel protein shk-1 (536 aa).

Disordered regions lie at residues 1–31 (MRFG…NKEK) and 87–131 (AAEM…HPYT). At 1–275 (MRFGGQRRCI…EYPDSSLSAR (275 aa)) the chain is on the cytoplasmic side. A compositionally biased stretch (polar residues) spans 116-131 (QRGTPDTSSTQGHPYT). A helical transmembrane segment spans residues 276 to 296 (IIAFISIAVIALSIISFCWET). Over 297–322 (VPSDIEEKPINNSATAELLDEMDEKH) the chain is Extracellular. The helical transmembrane segment at 323 to 343 (YSPFFWIELMCILWFTIELIL) threads the bilayer. Topologically, residues 344-356 (RFISCPCKVTFAT) are cytoplasmic. Residues 357–377 (SVLNIIDFVAIAPFFVNFFFA) form a helical membrane-spanning segment. At 378 to 425 (DTSKSNSSMSFAVLRVLRLVRVFRVFKLSRHSVGLQILGKTFRSSVQE) the chain is on the extracellular side. Residues 426 to 446 (FCLLIFFMAIALVLFASGMYF) traverse the membrane as a helical; Voltage-sensor segment. At 447–458 (AEQGEPNSKFTS) the chain is on the cytoplasmic side. A helical membrane pass occupies residues 459 to 479 (IPASFWFVLVTMTTVGYGDLV). Over 480–486 (PLSPFGK) the chain is Extracellular. A helical transmembrane segment spans residues 487–507 (VVGGMCAMIGVLTLALPVPII). Residues 508 to 536 (VANFKHFYRQENRLASMKSKGDDADDDIA) are Cytoplasmic-facing.

The protein belongs to the potassium channel family. A (Shaker) (TC 1.A.1.2) subfamily. Shaker sub-subfamily. Expressed in a variety of interneurons and sensory neurons, as well as body wall muscle.

The protein localises to the membrane. In terms of biological role, mediates the voltage-dependent potassium ion permeability of excitable membranes. Has an important role in repolarization and in regulating the pattern of action potential firing. Isoform a expresses currents in a more depolarized voltage range than isoform d. The protein is Potassium voltage-gated channel protein shk-1 of Caenorhabditis elegans.